We begin with the raw amino-acid sequence, 75 residues long: UPF0270 protein PSEEN1465 (75 aa).

This sequence belongs to the UPF0270 family.

This is UPF0270 protein PSEEN1465 from Pseudomonas entomophila (strain L48).